We begin with the raw amino-acid sequence, 122 residues long: Putative iron-sulfur cluster insertion protein ErpA (122 aa).

Iron-sulfur cluster is bound by residues C50, C114, and C116.

This sequence belongs to the HesB/IscA family. In terms of assembly, homodimer. It depends on iron-sulfur cluster as a cofactor.

Functionally, required for insertion of 4Fe-4S clusters. The polypeptide is Putative iron-sulfur cluster insertion protein ErpA (Burkholderia mallei (strain NCTC 10247)).